Reading from the N-terminus, the 135-residue chain is CDGSH iron-sulfur domain-containing protein 2B (135 aa).

Residues 1–37 (MMLESLARVFKVQLPAYLKRLPIPDSIAGFIRLTVLE) are Lumenal-facing. Residues 38–60 (WLRLLPFLGVLALLGYLAIRPFL) traverse the membrane as a helical segment. At 61–135 (PKKKQQKDSL…GPLILKKKEV (75 aa)) the chain is on the cytoplasmic side. [2Fe-2S] cluster-binding residues include Cys-99, Cys-101, Cys-110, and His-114.

This sequence belongs to the CISD protein family. CISD2 subfamily. In terms of assembly, homodimer. Requires [2Fe-2S] cluster as cofactor.

The protein resides in the endoplasmic reticulum membrane. Its subcellular location is the mitochondrion outer membrane. Regulator of autophagy that contributes to antagonize becn1-mediated cellular autophagy at the endoplasmic reticulum. Participates in the interaction of bcl2 with becn1 and is required for bcl2-mediated depression of endoplasmic reticulum Ca(2+) stores during autophagy. This chain is CDGSH iron-sulfur domain-containing protein 2B (cisd2-b), found in Xenopus laevis (African clawed frog).